The sequence spans 403 residues: Na(+)-translocating NADH-quinone reductase subunit B (403 aa).

The next 3 membrane-spanning stretches (helical) occupy residues 56–76 (IMIM…YNIG), 114–134 (LAMF…TFIV), and 165–185 (LPAT…VVIA). FMN phosphoryl threonine is present on threonine 231. Helical transmembrane passes span 260-280 (GSVG…IIYM), 287-307 (IVLG…VIGS), 312-332 (MFAM…GMFF), 348-368 (WAYG…NPAF), and 371-391 (GMML…YFVA).

It belongs to the NqrB/RnfD family. In terms of assembly, composed of six subunits; NqrA, NqrB, NqrC, NqrD, NqrE and NqrF. FMN is required as a cofactor.

Its subcellular location is the cell inner membrane. The enzyme catalyses a ubiquinone + n Na(+)(in) + NADH + H(+) = a ubiquinol + n Na(+)(out) + NAD(+). Its function is as follows. NQR complex catalyzes the reduction of ubiquinone-1 to ubiquinol by two successive reactions, coupled with the transport of Na(+) ions from the cytoplasm to the periplasm. NqrA to NqrE are probably involved in the second step, the conversion of ubisemiquinone to ubiquinol. This chain is Na(+)-translocating NADH-quinone reductase subunit B, found in Pseudoalteromonas atlantica (strain T6c / ATCC BAA-1087).